The chain runs to 168 residues: uncharacterized protein (168 aa).

Transmembrane regions (helical) follow at residues 4–24 (IIAL…PEEE) and 94–114 (IMVG…GFAW).

To A.aeolicus aq_1446.

It is found in the cell membrane. This is an uncharacterized protein from Aquifex aeolicus (strain VF5).